Reading from the N-terminus, the 595-residue chain is Adenine deaminase 3 (595 aa).

It belongs to the metallo-dependent hydrolases superfamily. Adenine deaminase family. The cofactor is Mn(2+).

The catalysed reaction is adenine + H2O + H(+) = hypoxanthine + NH4(+). This chain is Adenine deaminase 3, found in Rhizobium meliloti (strain 1021) (Ensifer meliloti).